Consider the following 196-residue polypeptide: Zinc metalloproteinase-disintegrin-like bothrojarin-3 (196 aa).

Residues 2 to 88 (PPVCGTELLE…DCPTDDIQRN (87 aa)) enclose the Disintegrin domain. Ca(2+) is bound by residues Val-4, Leu-9, Glu-11, Glu-14, and Asp-17. Intrachain disulfides connect Cys-5–Cys-34, Cys-16–Cys-29, Cys-18–Cys-24, Cys-28–Cys-51, Cys-42–Cys-48, Cys-47–Cys-73, Cys-60–Cys-80, Cys-67–Cys-99, Cys-92–Cys-104, Cys-111–Cys-161, Cys-126–Cys-168, Cys-139–Cys-149, and Cys-156–Cys-193. Positions 66 to 68 (ECD) match the D/ECD-tripeptide motif.

This sequence belongs to the venom metalloproteinase (M12B) family. P-III subfamily. P-IIIa sub-subfamily. As to quaternary structure, monomer. Zn(2+) serves as cofactor. Glycosylated. As to expression, expressed by the venom gland.

The protein localises to the secreted. Its function is as follows. The hemorrhagic metalloproteinase-disintegrin-like bothrojarin-1 is a potent inhibitor of collagen-induced platelet aggregation by blockage of alpha-2/beta-1 (ITGA2/ITGB1) integrin. It does not present any fibrinogen-clotting activity. The protein is Zinc metalloproteinase-disintegrin-like bothrojarin-3 of Bothrops jararaca (Jararaca).